The following is a 513-amino-acid chain: Xylose import ATP-binding protein XylG (513 aa).

ABC transporter domains are found at residues 5–242 (LEMK…VGRE) and 259–505 (LRIE…LRSE). An ATP-binding site is contributed by 37-44 (GENGSGKS).

Belongs to the ABC transporter superfamily. Xylose importer (TC 3.A.1.2.4) family. In terms of assembly, the complex is composed of two ATP-binding proteins (XylG), two transmembrane proteins (XylH) and a solute-binding protein (XylF).

The protein localises to the cell inner membrane. The catalysed reaction is D-xylose(out) + ATP + H2O = D-xylose(in) + ADP + phosphate + H(+). Part of the ABC transporter complex XylFGH involved in xylose import. Responsible for energy coupling to the transport system. The XylFGH system can also transport ribose in absence of xylose. This chain is Xylose import ATP-binding protein XylG, found in Escherichia coli (strain K12).